The chain runs to 250 residues: Glycerol uptake facilitator protein-like 5 (250 aa).

2 helical membrane passes run 12–32 (EFFG…NAFL) and 46–66 (GGWL…AMMF). Positions 75 to 77 (NPA) match the NPA 1 motif. 3 helical membrane passes run 85–105 (IGIF…LGAI), 142–162 (LNGF…AMGL), and 172–192 (IDIA…SLGG). An NPA 2 motif is present at residues 199–201 (NPA). The helical transmembrane segment at 230–250 (VVAPIVGAVIGIWIYKIFFGL) threads the bilayer.

Belongs to the MIP/aquaporin (TC 1.A.8) family.

The protein localises to the cell membrane. In terms of biological role, probable transporter that facilitates the transmembrane diffusion of an unknown substrate. Is not permeable to water, dihydroxyacetone, glycerol, urea, H(2)O(2) and D/L-lactic acid. This Lactiplantibacillus plantarum (strain ATCC BAA-793 / NCIMB 8826 / WCFS1) (Lactobacillus plantarum) protein is Glycerol uptake facilitator protein-like 5.